Reading from the N-terminus, the 150-residue chain is Arginine repressor (150 aa).

It belongs to the ArgR family.

The protein resides in the cytoplasm. It functions in the pathway amino-acid biosynthesis; L-arginine biosynthesis [regulation]. Functionally, regulates arginine biosynthesis genes. The chain is Arginine repressor from Staphylococcus epidermidis (strain ATCC 35984 / DSM 28319 / BCRC 17069 / CCUG 31568 / BM 3577 / RP62A).